Consider the following 508-residue polypeptide: Probable polyol transporter 3 (508 aa).

A run of 12 helical transmembrane segments spans residues 21–41 (FAFGCAIVASIISIIFGYDTG), 60–80 (QIEVLAGILNLCALVGSLTAG), 90–110 (YTIALSAVIFLVGSVLMGYGP), 120–140 (CIAGVGVGFALMIAPVYSAEI), 147–167 (GFLTSLPELCISLGILLGYVS), 178–198 (LGWRLMLGIAAFPSLILAFGI), 280–300 (ILIAAVGIHFFEHATGIEAVV), 318–338 (LLLATVGVGLTKAFFIIIATF), 348–368 (LLLTSTGGMVFALTSLAVSLT), 384–404 (IVSTYAFVAFFSIGLGPITWV), 418–438 (GASIGVAVNRIMNATVSMSFL), and 448–468 (GVFFVFAGIAVAAWWFFFFML).

The protein belongs to the major facilitator superfamily. Sugar transporter (TC 2.A.1.1) family.

Its subcellular location is the membrane. In terms of biological role, plasma membrane sugar-proton symporter. The polypeptide is Probable polyol transporter 3 (PLT3) (Arabidopsis thaliana (Mouse-ear cress)).